Reading from the N-terminus, the 125-residue chain is Crustacean hyperglycemic hormones 5 (125 aa).

A signal peptide spans 1–34; sequence MKPGNTSFNMVSFRMVWTAMMATLLVAGASSAGT. 3 disulfides stabilise this stretch: Cys58–Cys94, Cys74–Cys90, and Cys77–Cys103. A Valine amide modification is found at Val123.

It belongs to the arthropod CHH/MIH/GIH/VIH hormone family. As to expression, produced by the medulla terminalis X-organ in the eyestalks and transported to the sinus gland where they are stored and released.

It localises to the secreted. Its function is as follows. Hormone found in the sinus gland of isopods and decapods which controls the blood sugar level. Has a secretagogue action over the amylase released from the midgut gland. May act as a stress hormone and may be involved in the control of molting and reproduction. The polypeptide is Crustacean hyperglycemic hormones 5 (Penaeus japonicus (Kuruma prawn)).